A 228-amino-acid chain; its full sequence is 2,3-bisphosphoglycerate-dependent phosphoglycerate mutase (228 aa).

Substrate contacts are provided by residues 8-15 (RHGQSEWN), 21-22 (TG), arginine 60, 87-90 (ERHY), lysine 98, 114-115 (RR), and 183-184 (GN). Histidine 9 serves as the catalytic Tele-phosphohistidine intermediate. The active-site Proton donor/acceptor is the glutamate 87.

It belongs to the phosphoglycerate mutase family. BPG-dependent PGAM subfamily.

The enzyme catalyses (2R)-2-phosphoglycerate = (2R)-3-phosphoglycerate. The protein operates within carbohydrate degradation; glycolysis; pyruvate from D-glyceraldehyde 3-phosphate: step 3/5. In terms of biological role, catalyzes the interconversion of 2-phosphoglycerate and 3-phosphoglycerate. The protein is 2,3-bisphosphoglycerate-dependent phosphoglycerate mutase of Staphylococcus aureus (strain Mu3 / ATCC 700698).